A 1241-amino-acid polypeptide reads, in one-letter code: ATP-dependent helicase/nuclease subunit A (1241 aa).

The UvrD-like helicase ATP-binding domain maps to 12-485 (SQWTDDQWKA…IDLAKNFRSR (474 aa)). An ATP-binding site is contributed by 33–40 (AAAGSGKT). Residues 505–805 (GEIDYDADAE…RIMTIHKSKG (301 aa)) form the UvrD-like helicase C-terminal domain.

This sequence belongs to the helicase family. AddA subfamily. Heterodimer of AddA and AddB/RexB. Requires Mg(2+) as cofactor.

It catalyses the reaction Couples ATP hydrolysis with the unwinding of duplex DNA by translocating in the 3'-5' direction.. It carries out the reaction ATP + H2O = ADP + phosphate + H(+). In terms of biological role, the heterodimer acts as both an ATP-dependent DNA helicase and an ATP-dependent, dual-direction single-stranded exonuclease. Recognizes the chi site generating a DNA molecule suitable for the initiation of homologous recombination. The AddA nuclease domain is required for chi fragment generation; this subunit has the helicase and 3' -&gt; 5' nuclease activities. This Bacillus cereus (strain ATCC 10987 / NRS 248) protein is ATP-dependent helicase/nuclease subunit A.